The chain runs to 1821 residues: PH-interacting protein (1821 aa).

Serine 136 carries the post-translational modification Phosphoserine. 5 WD repeats span residues glycine 181–arginine 222, histidine 224–valine 262, glycine 265–arginine 310, arginine 319–glutamate 360, and phenylalanine 363–isoleucine 402. Lysine 421 is covalently cross-linked (Glycyl lysine isopeptide (Lys-Gly) (interchain with G-Cter in SUMO2)). WD repeat units follow at residues isoleucine 422–valine 461, glycine 464–serine 504, and glutamine 512–lysine 551. Serine 641, serine 659, serine 674, serine 677, serine 683, and serine 692 each carry phosphoserine. Disordered stretches follow at residues glutamate 653–isoleucine 695 and aspartate 782–valine 927. The span at serine 665–valine 681 shows a compositional bias: polar residues. Residues serine 800 to glutamate 810 show a composition bias toward basic and acidic residues. Over residues serine 841–aspartate 854 the composition is skewed to low complexity. 4 positions are modified to phosphoserine: serine 879, serine 880, serine 881, and serine 911. Residues proline 912 to arginine 924 are compositionally biased toward basic residues. Positions arginine 924–phenylalanine 1129 are mediates interaction with IRS1. The Bromo 1 domain maps to tryptophan 1156 to glutamine 1263. Phosphoserine occurs at positions 1281, 1283, and 1296. The interval aspartate 1282–arginine 1310 is disordered. Over residues threonine 1297 to arginine 1310 the composition is skewed to basic residues. Residue serine 1315 is modified to Phosphoserine. Residues tyrosine 1316 to valine 1421 form the Bromo 2 domain. The residue at position 1359 (threonine 1359) is a Phosphothreonine. Serine 1405 carries the post-translational modification Phosphoserine. Basic residues predominate over residues asparagine 1435–arginine 1446. The tract at residues asparagine 1435 to arginine 1507 is disordered. Low complexity predominate over residues serine 1447–serine 1457. Lysine 1470 participates in a covalent cross-link: Glycyl lysine isopeptide (Lys-Gly) (interchain with G-Cter in SUMO1); alternate. Lysine 1470 participates in a covalent cross-link: Glycyl lysine isopeptide (Lys-Gly) (interchain with G-Cter in SUMO2); alternate. Positions serine 1471 to threonine 1482 are enriched in polar residues. The residue at position 1479 (serine 1479) is a Phosphoserine. An N6-acetyllysine modification is found at lysine 1497. The residue at position 1525 (serine 1525) is a Phosphoserine. Residue lysine 1533 is modified to N6-acetyllysine. A compositionally biased stretch (polar residues) spans serine 1556–lysine 1576. Disordered stretches follow at residues serine 1556–lysine 1596, glutamine 1623–glutamine 1676, and arginine 1740–glutamate 1785. The residue at position 1560 (serine 1560) is a Phosphoserine. Lysine 1644 participates in a covalent cross-link: Glycyl lysine isopeptide (Lys-Gly) (interchain with G-Cter in SUMO2). Serine 1651 is subject to Phosphoserine. Residue lysine 1670 forms a Glycyl lysine isopeptide (Lys-Gly) (interchain with G-Cter in SUMO2) linkage. Residues serine 1762 and serine 1783 each carry the phosphoserine modification.

Interacts (via bromo domain) with acetylated lysine residues on histone H1.4, histone H3 and H4 (in vitro). Interacts with IRS1 and IRS2. As to expression, widely expressed with most abundant expression detected in pancreatic islets, brain and skeletal muscle. Predominantly expressed in developing and regenerating neurons. Expressed in adult brain (granular layer of the olfactorium bulb, hippocampus, dentate gyrus and cerebellum internal granular layer). Expressed in the CA3 region of adult hippocampus, adult and fetal retina, perinatal dorsal root ganglion and embryonal olfactory epithelia (at protein level).

It localises to the nucleus. Functionally, probable regulator of the insulin and insulin-like growth factor signaling pathways. Stimulates cell proliferation through regulation of cyclin transcription and has an anti-apoptotic activity through AKT1 phosphorylation and activation. Plays a role in the regulation of cell morphology and cytoskeletal organization. The protein is PH-interacting protein (Phip) of Mus musculus (Mouse).